Consider the following 387-residue polypeptide: Phosphoglycerate kinase (387 aa).

Residues 21–23, R36, and 59–62 each bind substrate; these read DLN and HLGR. K84 is modified (N6-acetyllysine). Substrate is bound by residues R113 and R146. Residues K197, E314, and 340 to 343 contribute to the ATP site; that span reads GGDT.

Belongs to the phosphoglycerate kinase family. Monomer.

Its subcellular location is the cytoplasm. It carries out the reaction (2R)-3-phosphoglycerate + ATP = (2R)-3-phospho-glyceroyl phosphate + ADP. It functions in the pathway carbohydrate degradation; glycolysis; pyruvate from D-glyceraldehyde 3-phosphate: step 2/5. This Escherichia coli O9:H4 (strain HS) protein is Phosphoglycerate kinase.